The sequence spans 210 residues: UPF0637 protein RBAM_014510 (210 aa).

It belongs to the UPF0637 family.

This chain is UPF0637 protein RBAM_014510, found in Bacillus velezensis (strain DSM 23117 / BGSC 10A6 / LMG 26770 / FZB42) (Bacillus amyloliquefaciens subsp. plantarum).